The sequence spans 658 residues: MRFAIPLGAACAWAGVALAALQIAEDDSTITLNNDRFKAVWSKSKGSVVDMFLDGQDLLGPQSGSTGIGPYLDCYCVPSGFYTAGATNPRMQYVEGTDSTGTNYAGVILNDTYTPTGQQFQQYWFLRDGETGLHMFSRLAYYNETTPFLRNLQEFRTLFRPNTQLWTHLTSSELQTAPLPSKNAVSKQVVVQDATWRFNNTPDDAYYTQFSEYFTKYTFSNQWRDNDVHGLYGDGTNSNGSTYGAWLVMNTKGPLHSDLTVDGIVYNYIVSNHHGEGTPNITNGFDRTFGPQFYLFNGGKGSTSSLQDLRSEAAKLADPSWNAEFYDSIAKHVVGYVPSSKRGSVDGRVKLPKGATNPIAILTVDGQYFQDNSVVPSSYQYWTDIDTSGKFRIDRVVEGKYRLTVYADGIFGDFVRDGVTVKAGKTTTVKEKWDAESAGKEVWRLGTPDKSSGEFRHGVARDPTHPLHPPEYLIYWGAYDWQSDLPKGIDYRIGSSDPATDFNTVHWSVFGPTPDNPDVEYNTTHDWKINFSLTKKQLRNSKKATLTIQLAGAKTASGNTDVYNASEPYINLSHESYINDQKEPLSFVIGFNQSSSCIVRSAVSCYQVRSRMEFPADWLKVGENTLTLHLPYNATDTETAILPATVYVQYDALRLELD.

The N-terminal stretch at 1-19 (MRFAIPLGAACAWAGVALA) is a signal peptide. N-linked (GlcNAc...) asparagine glycosylation is found at Asn-110, Asn-143, Asn-239, Asn-280, Asn-522, Asn-530, Asn-564, Asn-571, Asn-592, and Asn-633.

Belongs to the polysaccharide lyase 4 family.

Its subcellular location is the secreted. The catalysed reaction is Endotype eliminative cleavage of L-alpha-rhamnopyranosyl-(1-&gt;4)-alpha-D-galactopyranosyluronic acid bonds of rhamnogalacturonan I domains in ramified hairy regions of pectin leaving L-rhamnopyranose at the reducing end and 4-deoxy-4,5-unsaturated D-galactopyranosyluronic acid at the non-reducing end.. Its function is as follows. Pectinolytic enzymes consist of four classes of enzymes: pectin lyase, polygalacturonase, pectin methylesterase and rhamnogalacturonase. Degrades the rhamnogalacturonan I (RG-I) backbone of pectin. The protein is Probable rhamnogalacturonate lyase B (rglB) of Neosartorya fischeri (strain ATCC 1020 / DSM 3700 / CBS 544.65 / FGSC A1164 / JCM 1740 / NRRL 181 / WB 181) (Aspergillus fischerianus).